A 116-amino-acid polypeptide reads, in one-letter code: Putative pterin-4-alpha-carbinolamine dehydratase (116 aa).

The protein belongs to the pterin-4-alpha-carbinolamine dehydratase family.

It catalyses the reaction (4aS,6R)-4a-hydroxy-L-erythro-5,6,7,8-tetrahydrobiopterin = (6R)-L-erythro-6,7-dihydrobiopterin + H2O. The protein is Putative pterin-4-alpha-carbinolamine dehydratase of Xylella fastidiosa (strain M23).